We begin with the raw amino-acid sequence, 598 residues long: Elongation factor 4 (598 aa).

The tr-type G domain occupies 2 to 183 (KKIRNFCIIA…AIIEKIPPPK (182 aa)). GTP-binding positions include 14 to 19 (DHGKST) and 130 to 133 (NKVD).

The protein belongs to the TRAFAC class translation factor GTPase superfamily. Classic translation factor GTPase family. LepA subfamily.

It is found in the cell inner membrane. The catalysed reaction is GTP + H2O = GDP + phosphate + H(+). Its function is as follows. Required for accurate and efficient protein synthesis under certain stress conditions. May act as a fidelity factor of the translation reaction, by catalyzing a one-codon backward translocation of tRNAs on improperly translocated ribosomes. Back-translocation proceeds from a post-translocation (POST) complex to a pre-translocation (PRE) complex, thus giving elongation factor G a second chance to translocate the tRNAs correctly. Binds to ribosomes in a GTP-dependent manner. The polypeptide is Elongation factor 4 (Flavobacterium johnsoniae (strain ATCC 17061 / DSM 2064 / JCM 8514 / BCRC 14874 / CCUG 350202 / NBRC 14942 / NCIMB 11054 / UW101) (Cytophaga johnsonae)).